The chain runs to 111 residues: uncharacterized protein (111 aa).

The next 3 membrane-spanning stretches (helical) occupy residues 4 to 23, 39 to 61, and 65 to 84; these read LHQV…LGHV, IYLG…VLSA, and SGIQ…EAVL.

The protein localises to the cell membrane. This is an uncharacterized protein from Bacillus subtilis (strain 168).